Consider the following 66-residue polypeptide: Potassium channel toxin alpha-KTx (66 aa).

A signal peptide spans 1–21 (MNTKVVLIMLMITSVILVVEA). 4 disulfides stabilise this stretch: C29-C49, C35-C59, C39-C61, and C44-C64.

Belongs to the short scorpion toxin superfamily. Potassium channel inhibitor family. Expressed by the venom gland.

It is found in the secreted. In terms of biological role, blocks voltage-gated potassium channels. In Hoffmannihadrurus gertschi (Scorpion), this protein is Potassium channel toxin alpha-KTx.